We begin with the raw amino-acid sequence, 235 residues long: Glycerol-3-phosphate acyltransferase (235 aa).

6 helical membrane passes run 4-24, 56-76, 94-114, 124-144, 152-172, and 191-211; these read LLAI…IMAG, TVTL…VAFF, LLAG…GFKG, MLIG…LLTI, VASM…KYIF, and FHDS…LGIL.

It belongs to the PlsY family. In terms of assembly, probably interacts with PlsX.

Its subcellular location is the cell inner membrane. It carries out the reaction an acyl phosphate + sn-glycerol 3-phosphate = a 1-acyl-sn-glycero-3-phosphate + phosphate. Its pathway is lipid metabolism; phospholipid metabolism. In terms of biological role, catalyzes the transfer of an acyl group from acyl-phosphate (acyl-PO(4)) to glycerol-3-phosphate (G3P) to form lysophosphatidic acid (LPA). This enzyme utilizes acyl-phosphate as fatty acyl donor, but not acyl-CoA or acyl-ACP. The sequence is that of Glycerol-3-phosphate acyltransferase from Chlorobium limicola (strain DSM 245 / NBRC 103803 / 6330).